The chain runs to 1194 residues: Immunoglobulin superfamily member 3 (1194 aa).

Positions 1–19 (MKCFFPVLSCLAVLGVVSA) are cleaved as a signal peptide. Ig-like C2-type domains follow at residues 20–138 (QRQV…AKMN), 143–262 (PDSL…WYAM), 276–386 (PTDK…KTVT), 401–539 (PIVV…VSIT), 545–661 (FAVT…WTRL), 676–803 (PVTK…EEVS), 813–945 (PDSR…TAVT), and 949–1097 (PDAA…YRLT). Residues 20 to 1124 (QRQVTVQEGP…LQSLICSNDA (1105 aa)) lie on the Extracellular side of the membrane. 2 cysteine pairs are disulfide-bonded: C42–C120 and C167–C246. An N-linked (GlcNAc...) asparagine glycan is attached at N43. Positions 250 to 252 (EWI) match the EWI motif motif. A disulfide bond links C302 and C376. The N-linked (GlcNAc...) asparagine glycan is linked to N418. 5 disulfides stabilise this stretch: C432-C511, C566-C645, C701-C782, C838-C918, and C974-C1080. N-linked (GlcNAc...) asparagine glycosylation occurs at N842. A disordered region spans residues 997–1030 (GGGKRGSLGIDEQEEEEEEEDISQEEDSEDPTER). The span at 1007–1026 (DEQEEEEEEEDISQEEDSED) shows a compositional bias: acidic residues. N1077 carries an N-linked (GlcNAc...) asparagine glycan. A helical transmembrane segment spans residues 1125–1145 (LFYFVFFYPFPIFGILIITIL). Topologically, residues 1146–1194 (LVRFKSRNSSKNSEGKNGVPLLWIKEPHLNYSPTCLEPPVLSIHPGAID) are cytoplasmic.

Expressed in the lacrimal duct and lacrimal gland.

It is found in the membrane. The sequence is that of Immunoglobulin superfamily member 3 (Igsf3) from Mus musculus (Mouse).